We begin with the raw amino-acid sequence, 174 residues long: Large ribosomal subunit protein uL10 (174 aa).

This sequence belongs to the universal ribosomal protein uL10 family. Part of the ribosomal stalk of the 50S ribosomal subunit. The N-terminus interacts with L11 and the large rRNA to form the base of the stalk. The C-terminus forms an elongated spine to which L12 dimers bind in a sequential fashion forming a multimeric L10(L12)X complex.

Functionally, forms part of the ribosomal stalk, playing a central role in the interaction of the ribosome with GTP-bound translation factors. This Anaeromyxobacter dehalogenans (strain 2CP-C) protein is Large ribosomal subunit protein uL10.